Consider the following 227-residue polypeptide: Lectin (227 aa).

A signal peptide spans 1–28 (MTMTSTTTKAMAMAAAVLAAAAVAATNA). At glutamine 29 the chain carries Pyrrolidone carboxylic acid. Chitin-binding type-1 domains follow at residues 29–70 (QTCG…ACCS), 71–113 (SQRC…PCRA), 114–156 (DIKC…ACCP), and 157–199 (EKRC…GCYK). 16 cysteine pairs are disulfide-bonded: cysteine 31-cysteine 46, cysteine 40-cysteine 52, cysteine 45-cysteine 59, cysteine 63-cysteine 68, cysteine 74-cysteine 89, cysteine 83-cysteine 95, cysteine 88-cysteine 102, cysteine 106-cysteine 111, cysteine 117-cysteine 132, cysteine 126-cysteine 138, cysteine 131-cysteine 145, cysteine 149-cysteine 154, cysteine 160-cysteine 175, cysteine 169-cysteine 181, cysteine 174-cysteine 188, and cysteine 192-cysteine 197. 38–40 (MIC) lines the substrate pocket. Residue 90–101 (SQYGYCGFGSEY) coordinates substrate. 142–143 (SE) provides a ligand contact to substrate. The propeptide occupies 202–227 (DGMAAILANNQSVSFEGIIESVAELV). Residue asparagine 211 is glycosylated (N-linked (GlcNAc...) asparagine).

As to expression, confined to root caps, several cell layers at the periphery of the coleorhiza and radicle, and in all cell layers of the coleoptile.

N-acetyl-D-glucosamine binding lectin. The polypeptide is Lectin (Oryza sativa subsp. japonica (Rice)).